A 178-amino-acid polypeptide reads, in one-letter code: ATP synthase subunit delta (178 aa).

The protein belongs to the ATPase delta chain family. As to quaternary structure, F-type ATPases have 2 components, F(1) - the catalytic core - and F(0) - the membrane proton channel. F(1) has five subunits: alpha(3), beta(3), gamma(1), delta(1), epsilon(1). F(0) has three main subunits: a(1), b(2) and c(10-14). The alpha and beta chains form an alternating ring which encloses part of the gamma chain. F(1) is attached to F(0) by a central stalk formed by the gamma and epsilon chains, while a peripheral stalk is formed by the delta and b chains.

Its subcellular location is the cell inner membrane. In terms of biological role, f(1)F(0) ATP synthase produces ATP from ADP in the presence of a proton or sodium gradient. F-type ATPases consist of two structural domains, F(1) containing the extramembraneous catalytic core and F(0) containing the membrane proton channel, linked together by a central stalk and a peripheral stalk. During catalysis, ATP synthesis in the catalytic domain of F(1) is coupled via a rotary mechanism of the central stalk subunits to proton translocation. Its function is as follows. This protein is part of the stalk that links CF(0) to CF(1). It either transmits conformational changes from CF(0) to CF(1) or is implicated in proton conduction. The chain is ATP synthase subunit delta from Pseudomonas putida (strain W619).